A 280-amino-acid polypeptide reads, in one-letter code: Undecaprenyl-diphosphatase (280 aa).

8 consecutive transmembrane segments (helical) span residues 1–21 (MTIL…FLPV), 41–61 (FVRA…LVLY), 87–107 (FDLY…GFLF), 115–135 (LGSV…MLFV), 147–167 (ITYP…FLPG), 186–206 (KAAA…ATLL), 226–246 (VLLV…KFFI), and 260–280 (YRIL…SLAV).

Belongs to the UppP family.

It localises to the cell inner membrane. It carries out the reaction di-trans,octa-cis-undecaprenyl diphosphate + H2O = di-trans,octa-cis-undecaprenyl phosphate + phosphate + H(+). In terms of biological role, catalyzes the dephosphorylation of undecaprenyl diphosphate (UPP). Confers resistance to bacitracin. In Porphyromonas gingivalis (strain ATCC BAA-308 / W83), this protein is Undecaprenyl-diphosphatase.